Reading from the N-terminus, the 148-residue chain is Transcriptional regulator MraZ (148 aa).

SpoVT-AbrB domains are found at residues 7–56 and 85–128; these read KERH…EPDI and LDVV…APER.

The protein belongs to the MraZ family. As to quaternary structure, forms oligomers.

It is found in the cytoplasm. The protein localises to the nucleoid. The polypeptide is Transcriptional regulator MraZ (Chlorobium phaeobacteroides (strain DSM 266 / SMG 266 / 2430)).